An 889-amino-acid chain; its full sequence is Low-affinity potassium transport protein (889 aa).

At 1–51 (MPTAKRTSSRASLALPFQLRLVHKKSWGHRLRDFISGFLKSCRPIAKYVFP) the chain is on the cytoplasmic side. A helical membrane pass occupies residues 52–73 (NFIVVHYIYLITLSIIGSILLY). The Extracellular portion of the chain corresponds to 74-80 (PCKNTAF). The chain crosses the membrane as a helical span at residues 81-101 (IDVLFLAAGASTQGGLATKST). The Cytoplasmic segment spans residues 102–109 (NDFNLYQQ). Residues 110–130 (IVVYVITLLSTPILIHGFLAF) traverse the membrane as a helical segment. Over 131 to 464 (VRLYWFERYF…EYRALRLLCC (334 aa)) the chain is Extracellular. The segment at 189–244 (REDPRQSASDVPMDSPDTSALSSISPLNVSSSKEESSDTQSSPPNFSSKRQPSDVD) is disordered. Over residues 207–219 (SALSSISPLNVSS) the composition is skewed to low complexity. 3 N-linked (GlcNAc...) asparagine glycosylation sites follow: asparagine 216, asparagine 233, and asparagine 265. Residues 465–487 (ILMVYYIGFNILAFVTIVPWACT) traverse the membrane as a helical segment. Residues 488–499 (RHHYSEIIRRNG) lie on the Cytoplasmic side of the membrane. Residues 500-521 (VSPTWWGFFTAMSAFSNLGLSL) form a helical membrane-spanning segment. At 522 to 524 (TAD) the chain is on the extracellular side. Residues 525 to 545 (SMVSFDTAPYPLIFMMFFIII) form a helical membrane-spanning segment. The Cytoplasmic segment spans residues 546–548 (GNT). The chain crosses the membrane as a helical span at residues 549-569 (GFPIMLRFIIWIMFKTSRDLS). Residues 570 to 584 (QFKESLGFLLDHPRR) lie on the Extracellular side of the membrane. The chain crosses the membrane as a helical span at residues 585-605 (CFTLLFPSGPTWWLFTTLVVL). Over 606-609 (NATD) the chain is Cytoplasmic. The helical transmembrane segment at 610–630 (WILFIILDFNSAVVRQVAKGY) threads the bilayer. Over 631-657 (RALMGLFQSVCTRTAGFNVVDLSKLHP) the chain is Extracellular. Residues 658–678 (SIQVSYMLMMYVSVLPLAISI) traverse the membrane as a helical segment. The Cytoplasmic portion of the chain corresponds to 679 to 743 (RRTNVYEEQS…KSFVGAHLRR (65 aa)). Residues 705-733 (DDIKETDHDGESEERDTVSTKSKPKKQSP) are disordered. A helical transmembrane segment spans residues 744–764 (QLSFDLWYLFLGLFIICICEG). Residues 765-776 (RKIEDVNKPDFN) lie on the Extracellular side of the membrane. A helical membrane pass occupies residues 777–797 (VFAILFEVVSAYGTVGLSLGY). Residues 798-889 (PNTNTSLSAQ…KIATKFWGKH (92 aa)) lie on the Cytoplasmic side of the membrane.

This sequence belongs to the TrkH potassium transport family.

It localises to the membrane. This protein is required for low-affinity potassium transport. The chain is Low-affinity potassium transport protein (TRK2) from Saccharomyces cerevisiae (strain ATCC 204508 / S288c) (Baker's yeast).